Consider the following 338-residue polypeptide: Phenylalanine--tRNA ligase alpha subunit (338 aa).

A Mg(2+)-binding site is contributed by E252.

This sequence belongs to the class-II aminoacyl-tRNA synthetase family. Phe-tRNA synthetase alpha subunit type 1 subfamily. In terms of assembly, tetramer of two alpha and two beta subunits. It depends on Mg(2+) as a cofactor.

The protein resides in the cytoplasm. It carries out the reaction tRNA(Phe) + L-phenylalanine + ATP = L-phenylalanyl-tRNA(Phe) + AMP + diphosphate + H(+). The protein is Phenylalanine--tRNA ligase alpha subunit of Pseudomonas syringae pv. tomato (strain ATCC BAA-871 / DC3000).